Consider the following 148-residue polypeptide: Probable transporter PD_1893 (148 aa).

4 helical membrane-spanning segments follow: residues 11 to 31 (FTVA…SEMI), 48 to 68 (NPSL…GMAL), 93 to 113 (IVFG…CPGP), and 118 to 138 (LSTG…GMII).

Belongs to the TsuA/YedE (TC 9.B.102) family.

The protein resides in the cell inner membrane. This Xylella fastidiosa (strain Temecula1 / ATCC 700964) protein is Probable transporter PD_1893.